A 320-amino-acid chain; its full sequence is Myeloid-associated differentiation marker (320 aa).

MARVEL domains lie at 25-157 (ALTQ…ARPG) and 162-317 (YMAT…RLVF). The next 8 membrane-spanning stretches (helical) occupy residues 35 to 55 (LLQL…GAWT), 61 to 81 (WAMF…IVEL), 95 to 115 (FPIT…IIYP), 131 to 151 (AIAA…EVAW), 165 to 185 (TVPG…FAFI), 197 to 217 (LEWC…TILL), 233 to 253 (FLSG…VLWP), and 292 to 312 (LAVS…LVYS).

This sequence belongs to the MAL family.

It localises to the membrane. The protein is Myeloid-associated differentiation marker (Myadm) of Mus musculus (Mouse).